A 20-amino-acid chain; its full sequence is Apidaecin 3+ (20 aa).

The interval 1-20 (GKPSRPRPAPIQPRPPHPRL) is disordered.

The protein belongs to the apidaecin family.

It is found in the secreted. Functionally, antimicrobial peptide active against many Gram-negative enterobacterial and plant-associated bacterial species. Not active against other bacterial species like H.pylori, P.mirabilis, B.pertussis or N.gonorrhoeae. Its function is as follows. Among others, also active against S.typhi. Not active against S.typhi. This is Apidaecin 3+ from Pimpla disparis (Parasitic wasp).